The chain runs to 289 residues: ATP synthase gamma chain (289 aa).

The protein belongs to the ATPase gamma chain family. In terms of assembly, F-type ATPases have 2 components, CF(1) - the catalytic core - and CF(0) - the membrane proton channel. CF(1) has five subunits: alpha(3), beta(3), gamma(1), delta(1), epsilon(1). CF(0) has three main subunits: a, b and c.

The protein localises to the cell inner membrane. Produces ATP from ADP in the presence of a proton gradient across the membrane. The gamma chain is believed to be important in regulating ATPase activity and the flow of protons through the CF(0) complex. The chain is ATP synthase gamma chain from Actinobacillus succinogenes (strain ATCC 55618 / DSM 22257 / CCUG 43843 / 130Z).